We begin with the raw amino-acid sequence, 213 residues long: Adenylyl-sulfate kinase (213 aa).

Over residues 1-17 the composition is skewed to basic and acidic residues; that stretch reads MPAHQLDDHNQETRSDD. The segment at 1–20 is disordered; that stretch reads MPAHQLDDHNQETRSDDENI. Position 47 to 54 (47 to 54) interacts with ATP; sequence GLSGSGKS. Ser-121 acts as the Phosphoserine intermediate in catalysis.

Belongs to the APS kinase family.

It carries out the reaction adenosine 5'-phosphosulfate + ATP = 3'-phosphoadenylyl sulfate + ADP + H(+). It functions in the pathway sulfur metabolism; hydrogen sulfide biosynthesis; sulfite from sulfate: step 2/3. Its function is as follows. Catalyzes the synthesis of activated sulfate. The sequence is that of Adenylyl-sulfate kinase from Yersinia pestis.